Here is an 877-residue protein sequence, read N- to C-terminus: G-protein coupled receptor family C group 6 member A (877 aa).

An N-terminal signal peptide occupies residues 1-24 (MAGLDLSLVLMLSVLAGVREVSLT). The Extracellular segment spans residues 25–567 (QVNQQGVIAP…EYFEWNSGFA (543 aa)). 8 N-linked (GlcNAc...) asparagine glycosylation sites follow: Asn53, Asn99, Asn135, Asn263, Asn310, Asn322, Asn338, and Asn358. L-lysine is bound at residue Asp388. Residues Asn430, Asn475, Asn484, Asn528, and Asn548 are each glycosylated (N-linked (GlcNAc...) asparagine). A helical transmembrane segment spans residues 568–588 (IALLTLAALGILLLISMSALF). The Cytoplasmic portion of the chain corresponds to 589 to 603 (FWQRNSLVVKAAGGP). The chain crosses the membrane as a helical span at residues 604–624 (LCHLILFSLLGSFISVIFFVG). Topologically, residues 625 to 635 (EPSNESCRVRQ) are extracellular. Asn628 carries N-linked (GlcNAc...) asparagine glycosylation. A helical transmembrane segment spans residues 636–656 (VIFGLSFTLCVSCILVKSLKI). Topologically, residues 657–676 (LLAFQMNLELKELLRKLYKP) are cytoplasmic. A helical membrane pass occupies residues 677–697 (YVIVCMCMGLQVTICTLWLTL). The Extracellular segment spans residues 698–720 (HRPFIEKVVQPKSILLECNEGSD). A helical membrane pass occupies residues 721 to 741 (LMFGLMLGYIVLLALICFTFA). The Cytoplasmic portion of the chain corresponds to 742 to 755 (YKGRKLPQKYNEAK). A helical transmembrane segment spans residues 756 to 776 (FITFGMLIYLMAWVIFIPVHV). At 777-782 (TTSGKY) the chain is on the extracellular side. Residues 783–803 (VPAVEVVVILISNYGILSCHF) traverse the membrane as a helical segment. The Cytoplasmic segment spans residues 804–877 (LPKCYIIIFK…VSVPEIDNVL (74 aa)).

Belongs to the G-protein coupled receptor 3 family. In terms of assembly, homodimer; disulfide-linked. As to expression, expressed in olfactory epithelium. Also expressed in gills, tongue, lips and palatal organ. Not expressed in brain, kidney, liver, muscle, intestine, ovary and skin. In olfactory epithelium, it is widely expressed over the apical and medial portions of the olfactory sensory neurons, regions that contain olfactory neurons. Expressed in external epithelia, which contains taste buds and solitary chemosensory cells. On gill rakers, it is widely expressed in the surface epithelium, but excluded from taste buds.

The protein resides in the cell membrane. Olfactory receptor that is activated by amino acids that act as potent odorants in fish. Most highly activated by basic amino acids such as L-lysine and L-arginine. The protein is G-protein coupled receptor family C group 6 member A (gprc6a) of Carassius auratus (Goldfish).